Reading from the N-terminus, the 22-residue chain is Myofibril-bound serine protease (22 aa).

The protein belongs to the peptidase S1 family. In terms of tissue distribution, detected in muscle (at protein level).

Its subcellular location is the cytoplasm. With respect to regulation, inhibited by the serine protease inhibitors, antipain, aprotinin, DFP, leupeptin, STI and TLCK, and by the cysteine proteinase inhibitors DTNB and to a lesser extent E-64. Not inhibited by the metalloproteinase inhibitor EDTA. Functionally, serine protease that selectively cleaves Arg-|-Xaa bonds. The chain is Myofibril-bound serine protease from Cyprinus carpio (Common carp).